A 674-amino-acid chain; its full sequence is Forkhead box protein P1 (674 aa).

A compositionally biased stretch (polar residues) spans 1-19; that stretch reads MMQESGTETKSNGSAIQNG. Positions 1–44 are disordered; the sequence is MMQESGTETKSNGSAIQNGSSGGNHLLECGSLREGRSNGETPAV. Residue serine 82 is modified to Phosphoserine. Residues 269 to 281 are compositionally biased toward polar residues; sequence MNPHASTNGQLSV. The interval 269–296 is disordered; it reads MNPHASTNGQLSVHTPKRESLSHEEHPH. The segment covering 284–296 has biased composition (basic and acidic residues); that stretch reads PKRESLSHEEHPH. Lysine 285 participates in a covalent cross-link: Glycyl lysine isopeptide (Lys-Gly) (interchain with G-Cter in SUMO2). A C2H2-type zinc finger spans residues 304–329; sequence GVCKWPGCEAVCEDFQSFLKHLNSEH. Residues 346–367 are leucine-zipper; that stretch reads VQQLELQLAKDKERLQAMMTHL. Residues lysine 370 and lysine 375 each participate in a glycyl lysine isopeptide (Lys-Gly) (interchain with G-Cter in SUMO2) cross-link. The interval 380-384 is CTBP1-binding; sequence PLNLV. A compositionally biased stretch (polar residues) spans 388–401; it reads TLSKSASEASPQSL. The interval 388 to 427 is disordered; that stretch reads TLSKSASEASPQSLPHTPTTPTAPITPATQGPSVITTTSM. Low complexity predominate over residues 402–419; sequence PHTPTTPTAPITPATQGP. Lysine 440 participates in a covalent cross-link: Glycyl lysine isopeptide (Lys-Gly) (interchain with G-Cter in SUMO2). Residues 462–552 constitute a DNA-binding region (fork-head); that stretch reads RPPFTYASLI…PQKISGNPSL (91 aa). A disordered region spans residues 608–674; sequence EHTNSNESDS…EDEPVNEDME (67 aa). Polar residues predominate over residues 609–620; it reads HTNSNESDSSPG. At threonine 650 the chain carries Phosphothreonine. At serine 655 the chain carries Phosphoserine. A compositionally biased stretch (acidic residues) spans 664–674; it reads YEDEPVNEDME.

Forms homodimers and heterodimers with FOXP2 and FOXP4. Dimerization is required for DNA-binding. Self-associates. Interacts with CTBP1. Interacts with NCOR2 and AR. Interacts with FOXP2. Interacts with TBR1. Interacts with AURKA; this interaction facilitates the phosphorylation of FOXP1, which suppresses the expression of FBXL7. Interacts with ZMYM2.

It is found in the nucleus. In terms of biological role, transcriptional repressor. Can act with CTBP1 to synergistically repress transcription but CTPBP1 is not essential. Plays an important role in the specification and differentiation of lung epithelium. Acts cooperatively with FOXP4 to regulate lung secretory epithelial cell fate and regeneration by restricting the goblet cell lineage program; the function may involve regulation of AGR2. Essential transcriptional regulator of B-cell development. Involved in regulation of cardiac muscle cell proliferation. Involved in the columnar organization of spinal motor neurons. Promotes the formation of the lateral motor neuron column (LMC) and the preganglionic motor column (PGC) and is required for respective appropriate motor axon projections. The segment-appropriate generation of spinal cord motor columns requires cooperation with other Hox proteins. Can regulate PITX3 promoter activity; may promote midbrain identity in embryonic stem cell-derived dopamine neurons by regulating PITX3. Negatively regulates the differentiation of T follicular helper cells T(FH)s. Involved in maintenance of hair follicle stem cell quiescence; the function probably involves regulation of FGF18. Represses transcription of various pro-apoptotic genes and cooperates with NF-kappa B-signaling in promoting B-cell expansion by inhibition of caspase-dependent apoptosis. Binds to CSF1R promoter elements and is involved in regulation of monocyte differentiation and macrophage functions; repression of CSF1R in monocytes seems to involve NCOR2 as corepressor. Involved in endothelial cell proliferation, tube formation and migration indicative for a role in angiogenesis; the role in neovascularization seems to implicate suppression of SEMA5B. Can negatively regulate androgen receptor signaling. Acts as a transcriptional activator of the FBXL7 promoter; this activity is regulated by AURKA. This chain is Forkhead box protein P1 (FOXP1), found in Bos taurus (Bovine).